Consider the following 310-residue polypeptide: ADP-L-glycero-D-manno-heptose-6-epimerase (310 aa).

Residues 10–11, 31–32, lysine 38, lysine 53, 75–79, and asparagine 92 contribute to the NADP(+) site; these read FI, DN, and EGACS. Tyrosine 140 (proton acceptor) is an active-site residue. Lysine 144 contacts NADP(+). Residue asparagine 169 coordinates substrate. Valine 170 and lysine 178 together coordinate NADP(+). The Proton acceptor role is filled by lysine 178. Residues serine 180, histidine 187, 201–204, arginine 209, and tyrosine 272 contribute to the substrate site; that span reads FSGS.

The protein belongs to the NAD(P)-dependent epimerase/dehydratase family. HldD subfamily. In terms of assembly, homopentamer. NADP(+) is required as a cofactor.

The enzyme catalyses ADP-D-glycero-beta-D-manno-heptose = ADP-L-glycero-beta-D-manno-heptose. The protein operates within nucleotide-sugar biosynthesis; ADP-L-glycero-beta-D-manno-heptose biosynthesis; ADP-L-glycero-beta-D-manno-heptose from D-glycero-beta-D-manno-heptose 7-phosphate: step 4/4. Functionally, catalyzes the interconversion between ADP-D-glycero-beta-D-manno-heptose and ADP-L-glycero-beta-D-manno-heptose via an epimerization at carbon 6 of the heptose. The protein is ADP-L-glycero-D-manno-heptose-6-epimerase of Pectobacterium carotovorum subsp. carotovorum (strain PC1).